We begin with the raw amino-acid sequence, 432 residues long: Serine/threonine-protein phosphatase 2A activator 1 (432 aa).

The protein belongs to the PTPA-type PPIase family.

It is found in the cytoplasm. Its subcellular location is the nucleus. It catalyses the reaction [protein]-peptidylproline (omega=180) = [protein]-peptidylproline (omega=0). PPIases accelerate the folding of proteins. It catalyzes the cis-trans isomerization of proline imidic peptide bonds in oligopeptides. Acts as a regulatory subunit for PP2A-like phosphatases modulating their activity or substrate specificity, probably by inducing a conformational change in the catalytic subunit, a direct target of the PPIase. Can reactivate inactive phosphatase PP2A-phosphatase methylesterase complexes (PP2Ai) in presence of ATP and Mg(2+) by dissociating the inactive form from the complex. The chain is Serine/threonine-protein phosphatase 2A activator 1 (rrd1) from Emericella nidulans (strain FGSC A4 / ATCC 38163 / CBS 112.46 / NRRL 194 / M139) (Aspergillus nidulans).